The primary structure comprises 425 residues: Putative type I restriction enzyme MjaX specificity subunit (425 aa).

The protein belongs to the type-I restriction system S methylase family.

In terms of biological role, a putative specificity (S) subunit of a type I restriction enzyme thought to recognize 5'-TAGN(6)TGC-3'; the other subunits are unknown. This chain is Putative type I restriction enzyme MjaX specificity subunit, found in Methanocaldococcus jannaschii (strain ATCC 43067 / DSM 2661 / JAL-1 / JCM 10045 / NBRC 100440) (Methanococcus jannaschii).